We begin with the raw amino-acid sequence, 179 residues long: Large ribosomal subunit protein uL5 (179 aa).

The protein belongs to the universal ribosomal protein uL5 family. As to quaternary structure, part of the 50S ribosomal subunit; part of the 5S rRNA/L5/L18/L25 subcomplex. Contacts the 5S rRNA and the P site tRNA. Forms a bridge to the 30S subunit in the 70S ribosome.

Functionally, this is one of the proteins that bind and probably mediate the attachment of the 5S RNA into the large ribosomal subunit, where it forms part of the central protuberance. In the 70S ribosome it contacts protein S13 of the 30S subunit (bridge B1b), connecting the 2 subunits; this bridge is implicated in subunit movement. Contacts the P site tRNA; the 5S rRNA and some of its associated proteins might help stabilize positioning of ribosome-bound tRNAs. The chain is Large ribosomal subunit protein uL5 from Chromobacterium violaceum (strain ATCC 12472 / DSM 30191 / JCM 1249 / CCUG 213 / NBRC 12614 / NCIMB 9131 / NCTC 9757 / MK).